The sequence spans 378 residues: Anhydro-N-acetylmuramic acid kinase (378 aa).

9–16 is an ATP binding site; that stretch reads GTSADGID.

It belongs to the anhydro-N-acetylmuramic acid kinase family.

It catalyses the reaction 1,6-anhydro-N-acetyl-beta-muramate + ATP + H2O = N-acetyl-D-muramate 6-phosphate + ADP + H(+). It functions in the pathway amino-sugar metabolism; 1,6-anhydro-N-acetylmuramate degradation. It participates in cell wall biogenesis; peptidoglycan recycling. In terms of biological role, catalyzes the specific phosphorylation of 1,6-anhydro-N-acetylmuramic acid (anhMurNAc) with the simultaneous cleavage of the 1,6-anhydro ring, generating MurNAc-6-P. Is required for the utilization of anhMurNAc either imported from the medium or derived from its own cell wall murein, and thus plays a role in cell wall recycling. The sequence is that of Anhydro-N-acetylmuramic acid kinase from Synechococcus sp. (strain ATCC 27144 / PCC 6301 / SAUG 1402/1) (Anacystis nidulans).